Here is a 779-residue protein sequence, read N- to C-terminus: Chloride channel protein CLC-c (779 aa).

Ser27 is modified (phosphoserine). The next 12 membrane-spanning stretches (helical) occupy residues 92–112 (TFLKWALAFLIGLATGLVGFL), 142–162 (FAFAGCNLILATAAASLCAFI), 190–210 (STLFVKIFGSIFGVAAGFVVG), 215–235 (MVHTGACIANLLGQGGSKKYR), 257–277 (GAAAGVAAAFRAPVGGVLFAL), 287–307 (ALLWRTFFTTAVVAVVLRSLI), 341–361 (LAIVFLGVIGGVLGSLYNYLV), 380–400 (IMLVMAVSILSSCCAFGLPWL), 466–486 (LAIFFVAVYCLGIITYGIAIP), 488–508 (GLFIPVILAGASYGRLVGRLL), 520–540 (SLLGAASFLGGTMRMTVSLCV), and 541–561 (ILLELTNNLLMLPLVMLVLLI). The region spanning 601 to 659 (DVVSGALISFSRVEKVGVIWQALKMTRHNGFPVIDEPPFTEASELCGIALRSHLLVLLQ) is the CBS 1 domain. Ser672 carries the post-translational modification Phosphoserine. Residues 713–777 (ITNTSPYTVL…VLGLYPHIDP (65 aa)) form the CBS 2 domain. A helical membrane pass occupies residues 741–761 (HLCVVPKTPGRPPIVGILTRH).

Belongs to the chloride channel (TC 2.A.49) family. As to quaternary structure, homodimer. Interacts with PP2A5. Broadly expressed in the plant.

It localises to the membrane. In terms of biological role, voltage-gated chloride channel. The sequence is that of Chloride channel protein CLC-c (CLC-C) from Arabidopsis thaliana (Mouse-ear cress).